Here is a 231-residue protein sequence, read N- to C-terminus: eRF1 methyltransferase catalytic subunit mtq2 (231 aa).

S-adenosyl-L-methionine is bound by residues 54 to 58 (GCGSG), D80, and N130. 130–133 (NPPY) is a binding site for substrate.

This sequence belongs to the eukaryotic/archaeal PrmC-related family. In terms of assembly, heterodimer of mtq2-trm112. mtq2 is the catalytic subunit carrying the catalytic and the S-adenosyl L-methionine binding sites.

Its subcellular location is the cytoplasm. It localises to the nucleus. It carries out the reaction L-glutaminyl-[peptide chain release factor] + S-adenosyl-L-methionine = N(5)-methyl-L-glutaminyl-[peptide chain release factor] + S-adenosyl-L-homocysteine + H(+). Methylates eRF1 on 'Gln-182' using S-adenosyl L-methionine as methyl donor. eRF1 needs to be complexed to eRF3 in its GTP-bound form to be efficiently methylated. In Schizosaccharomyces pombe (strain 972 / ATCC 24843) (Fission yeast), this protein is eRF1 methyltransferase catalytic subunit mtq2 (mtq2).